We begin with the raw amino-acid sequence, 107 residues long: Anti-adapter protein IraM (107 aa).

Belongs to the IraM/RssC family.

It localises to the cytoplasm. Inhibits RpoS proteolysis by regulating RssB activity, thereby increasing the stability of the sigma stress factor RpoS during magnesium starvation. This chain is Anti-adapter protein IraM, found in Shigella sonnei (strain Ss046).